The primary structure comprises 155 residues: Aspartate carbamoyltransferase regulatory chain (155 aa).

Residues Cys-112, Cys-117, Cys-138, and Cys-141 each coordinate Zn(2+).

This sequence belongs to the PyrI family. Contains catalytic and regulatory chains. It depends on Zn(2+) as a cofactor.

Its function is as follows. Involved in allosteric regulation of aspartate carbamoyltransferase. The sequence is that of Aspartate carbamoyltransferase regulatory chain from Methanocorpusculum labreanum (strain ATCC 43576 / DSM 4855 / Z).